The primary structure comprises 288 residues: 4-diphosphocytidyl-2-C-methyl-D-erythritol kinase (288 aa).

The active site involves Lys-10. Pro-99–Ser-109 provides a ligand contact to ATP. The active site involves Asp-141.

This sequence belongs to the GHMP kinase family. IspE subfamily. Homodimer.

It catalyses the reaction 4-CDP-2-C-methyl-D-erythritol + ATP = 4-CDP-2-C-methyl-D-erythritol 2-phosphate + ADP + H(+). It participates in isoprenoid biosynthesis; isopentenyl diphosphate biosynthesis via DXP pathway; isopentenyl diphosphate from 1-deoxy-D-xylulose 5-phosphate: step 3/6. Its function is as follows. Catalyzes the phosphorylation of the position 2 hydroxy group of 4-diphosphocytidyl-2C-methyl-D-erythritol. The sequence is that of 4-diphosphocytidyl-2-C-methyl-D-erythritol kinase from Serratia proteamaculans (strain 568).